A 137-amino-acid chain; its full sequence is Large ribosomal subunit protein uL16 (137 aa).

This sequence belongs to the universal ribosomal protein uL16 family. In terms of assembly, part of the 50S ribosomal subunit.

Binds 23S rRNA and is also seen to make contacts with the A and possibly P site tRNAs. This is Large ribosomal subunit protein uL16 from Rhodopseudomonas palustris (strain ATCC BAA-98 / CGA009).